The following is an 841-amino-acid chain: Protein translocase subunit SecA (841 aa).

ATP-binding positions include Q85, 103–107, and D492; that span reads GEGKT. Residues 786–812 form a disordered region; that stretch reads REEVVQGQTTAHQPQDGDEAKQAKKAP. Zn(2+) is bound by residues C825, C827, C836, and C837.

The protein belongs to the SecA family. Monomer and homodimer. Part of the essential Sec protein translocation apparatus which comprises SecA, SecYEG and auxiliary proteins SecDF. Other proteins may also be involved. The cofactor is Zn(2+).

The protein resides in the cell membrane. It is found in the cytoplasm. It carries out the reaction ATP + H2O + cellular proteinSide 1 = ADP + phosphate + cellular proteinSide 2.. In terms of biological role, part of the Sec protein translocase complex. Interacts with the SecYEG preprotein conducting channel. Has a central role in coupling the hydrolysis of ATP to the transfer of proteins into and across the cell membrane, serving as an ATP-driven molecular motor driving the stepwise translocation of polypeptide chains across the membrane. This chain is Protein translocase subunit SecA, found in Bacillus velezensis (strain DSM 23117 / BGSC 10A6 / LMG 26770 / FZB42) (Bacillus amyloliquefaciens subsp. plantarum).